The primary structure comprises 415 residues: Tyrosine--tRNA ligase (415 aa).

L-tyrosine is bound at residue Tyr33. The short motif at Pro38–Asn47 is the 'HIGH' region element. Positions 161 and 165 each coordinate L-tyrosine. A 'KMSKS' region motif is present at residues Lys225 to Ser229. Lys228 is an ATP binding site. The S4 RNA-binding domain occupies Met350–Lys414.

This sequence belongs to the class-I aminoacyl-tRNA synthetase family. TyrS type 1 subfamily. Homodimer.

Its subcellular location is the cytoplasm. It catalyses the reaction tRNA(Tyr) + L-tyrosine + ATP = L-tyrosyl-tRNA(Tyr) + AMP + diphosphate + H(+). Functionally, catalyzes the attachment of tyrosine to tRNA(Tyr) in a two-step reaction: tyrosine is first activated by ATP to form Tyr-AMP and then transferred to the acceptor end of tRNA(Tyr). In Mycoplasmoides gallisepticum (strain R(low / passage 15 / clone 2)) (Mycoplasma gallisepticum), this protein is Tyrosine--tRNA ligase.